Consider the following 526-residue polypeptide: Maturase K (526 aa).

It belongs to the intron maturase 2 family. MatK subfamily.

It localises to the plastid. The protein resides in the chloroplast. Usually encoded in the trnK tRNA gene intron. Probably assists in splicing its own and other chloroplast group II introns. The sequence is that of Maturase K from Iris pseudacorus (Yellow flag).